Reading from the N-terminus, the 449-residue chain is Glucose-6-phosphate isomerase (449 aa).

Catalysis depends on glutamate 291, which acts as the Proton donor. Active-site residues include histidine 312 and lysine 426.

It belongs to the GPI family.

The protein localises to the cytoplasm. The catalysed reaction is alpha-D-glucose 6-phosphate = beta-D-fructose 6-phosphate. The protein operates within carbohydrate biosynthesis; gluconeogenesis. It participates in carbohydrate degradation; glycolysis; D-glyceraldehyde 3-phosphate and glycerone phosphate from D-glucose: step 2/4. Catalyzes the reversible isomerization of glucose-6-phosphate to fructose-6-phosphate. This is Glucose-6-phosphate isomerase from Streptococcus pyogenes serotype M18 (strain MGAS8232).